A 352-amino-acid polypeptide reads, in one-letter code: Glycerol-3-phosphate dehydrogenase [NAD(P)+] (352 aa).

Residues serine 11, tryptophan 12, arginine 32, and lysine 105 each coordinate NADPH. Lysine 105, glycine 133, and serine 135 together coordinate sn-glycerol 3-phosphate. An NADPH-binding site is contributed by alanine 137. Residues lysine 188, aspartate 241, serine 251, arginine 252, and asparagine 253 each coordinate sn-glycerol 3-phosphate. Lysine 188 serves as the catalytic Proton acceptor. Residue arginine 252 participates in NADPH binding. Residues valine 276 and glutamate 278 each coordinate NADPH.

Belongs to the NAD-dependent glycerol-3-phosphate dehydrogenase family.

Its subcellular location is the cytoplasm. The enzyme catalyses sn-glycerol 3-phosphate + NAD(+) = dihydroxyacetone phosphate + NADH + H(+). It catalyses the reaction sn-glycerol 3-phosphate + NADP(+) = dihydroxyacetone phosphate + NADPH + H(+). The protein operates within membrane lipid metabolism; glycerophospholipid metabolism. Catalyzes the reduction of the glycolytic intermediate dihydroxyacetone phosphate (DHAP) to sn-glycerol 3-phosphate (G3P), the key precursor for phospholipid synthesis. The sequence is that of Glycerol-3-phosphate dehydrogenase [NAD(P)+] from Desulfitobacterium hafniense (strain Y51).